Consider the following 881-residue polypeptide: Disks large homolog 2 (881 aa).

2 disordered regions span residues 16 to 41 (HRQQ…MNPA) and 63 to 88 (LSTT…SFPR). PDZ domains are found at residues 155–242 (EITL…RRRR), 250–337 (EIKL…GKPT), and 424–505 (KIVL…QYRP). An SH3 domain is found at 539–609 (KRSLYVRALF…PSKRRVERKE (71 aa)). One can recognise a Guanylate kinase-like domain in the interval 683 to 866 (ARPVIILGPM…IYNQCKMVIE (184 aa)). The interval 709–729 (GSCVPPANSSDQEDTTRPKRD) is disordered.

This sequence belongs to the MAGUK family.

It is found in the cell membrane. The protein localises to the postsynaptic density. It localises to the synapse. The protein resides in the membrane. Its subcellular location is the cell projection. It is found in the axon. The protein localises to the perikaryon. May play a role in synapse assembly and function. In Danio rerio (Zebrafish), this protein is Disks large homolog 2 (dlg2).